A 61-amino-acid polypeptide reads, in one-letter code: Large ribosomal subunit protein bL28 (61 aa).

It belongs to the bacterial ribosomal protein bL28 family.

This Nautilia profundicola (strain ATCC BAA-1463 / DSM 18972 / AmH) protein is Large ribosomal subunit protein bL28.